We begin with the raw amino-acid sequence, 472 residues long: Protein hedgehog (472 aa).

A lipid anchor (N-palmitoyl cysteine) is attached at cysteine 84. Residues glutamate 149, aspartate 154, glutamate 185, aspartate 188, and aspartate 190 each coordinate Ca(2+). Glycine 256 carries Cholesterol glycine ester lipidation.

Belongs to the hedgehog family. As to quaternary structure, interacts with shf. Post-translationally, the C-terminal part of the hedgehog protein precursor displays an autoproteolysis activity that results in the cleavage of the full-length protein into two parts (N-product and C-product). In addition, the C-terminal part displays a cholesterol transferase activity that results by the covalent attachment of a cholesterol moiety to the C-terminal of the newly generated N-product. The N-product is the active species in both local and long-range signaling, whereas the C-product has no signaling activity. In terms of processing, cholesterylation is required for N-product targeting to lipid rafts and multimerization. N-palmitoylation by Rasp of the hedgehog N-product, within the secretory pathway, is required for the embryonic and larval patterning activities of the hedgehog signal.

The protein resides in the nucleus. It localises to the cytoplasm. It is found in the cell membrane. It catalyses the reaction glycyl-L-cysteinyl-[protein] + cholesterol + H(+) = [protein]-C-terminal glycyl cholesterol ester + N-terminal L-cysteinyl-[protein]. Functionally, the C-terminal part of the hedgehog protein precursor displays an autoproteolysis activity that results in the cleavage of the full-length protein into two parts (N-product and C-product). In addition, the C-terminal part displays a cholesterol transferase activity that results by the covalent attachment of a cholesterol moiety to the C-terminal of the newly generated N-product. Once cleaved, the C-product has no signaling activity and diffuses from the cell. Its function is as follows. The dually lipidated hedgehog protein N-product is a morphogen which is essential for a variety of patterning events during development. Establishes the anterior-posterior axis of the embryonic segments and patterns the larval imaginal disks. Binds to the patched (ptc) receptor, which functions in association with smoothened (smo), to activate the transcription of target genes wingless (wg), decapentaplegic (dpp) and ptc. In the absence of hh, ptc represses the constitutive signaling activity of smo through fused (fu). Essential component of a signaling pathway which regulates the Duox-dependent gut immune response to bacterial uracil; required to activate Cad99C-dependent endosome formation, norpA-dependent Ca2+ mobilization and p38 MAPK, which are essential steps in the Duox-dependent production of reactive oxygen species (ROS) in response to intestinal bacterial infection. During photoreceptor differentiation, it up-regulates transcription of Ubr3, which in turn promotes the hh-signaling pathway by mediating the ubiquitination and degradation of cos. This is Protein hedgehog from Drosophila ananassae (Fruit fly).